The chain runs to 944 residues: Leucine--tRNA ligase (944 aa).

Residues 40–51 (PYPSGAGLHVGH) carry the 'HIGH' region motif. The short motif at 718–722 (KMSKS) is the 'KMSKS' region element. Lys-721 serves as a coordination point for ATP.

Belongs to the class-I aminoacyl-tRNA synthetase family.

The protein resides in the cytoplasm. It carries out the reaction tRNA(Leu) + L-leucine + ATP = L-leucyl-tRNA(Leu) + AMP + diphosphate. This is Leucine--tRNA ligase from Bacteroides thetaiotaomicron (strain ATCC 29148 / DSM 2079 / JCM 5827 / CCUG 10774 / NCTC 10582 / VPI-5482 / E50).